An 802-amino-acid chain; its full sequence is Copper-exporting P-type ATPase (802 aa).

HMA domains are found at residues 5 to 70 (KKTT…YGVA) and 72 to 138 (ETVE…YDAS). Cu(+)-binding residues include Cys-16, Cys-19, Cys-83, and Cys-86. Transmembrane regions (helical) follow at residues 161–181 (LIISAVLSLPLLMLMFVHLFN), 192–212 (WFQFILATPVQFIIGWQFYVG), 224–244 (MDVLVAVGTSAAYFYSIYEMV), 256–276 (LYFETSAVLITLILFGKYLEA), 411–431 (YFVPIVVGIALLTFIVWITLV), and 438–458 (PALVASISVLVIACPCALGLA). Asp-495 (4-aspartylphosphate intermediate) is an active-site residue. Asp-690 and Asp-694 together coordinate Mg(2+). 2 consecutive transmembrane segments (helical) span residues 748-767 (LFWAFGYNIAGIPIAALGLL) and 771-790 (VAGAAMALSSVSVVTNALRL).

It belongs to the cation transport ATPase (P-type) (TC 3.A.3) family. Type IB subfamily.

The protein resides in the cell membrane. The enzyme catalyses Cu(+)(in) + ATP + H2O = Cu(+)(out) + ADP + phosphate + H(+). In terms of biological role, involved in copper export. This Staphylococcus aureus (strain MRSA252) protein is Copper-exporting P-type ATPase (copA).